A 282-amino-acid polypeptide reads, in one-letter code: Bifunctional protein FolD (282 aa).

NADP(+) contacts are provided by residues 164 to 166 (GRS) and Ser-189.

The protein belongs to the tetrahydrofolate dehydrogenase/cyclohydrolase family. Homodimer.

The enzyme catalyses (6R)-5,10-methylene-5,6,7,8-tetrahydrofolate + NADP(+) = (6R)-5,10-methenyltetrahydrofolate + NADPH. It carries out the reaction (6R)-5,10-methenyltetrahydrofolate + H2O = (6R)-10-formyltetrahydrofolate + H(+). It participates in one-carbon metabolism; tetrahydrofolate interconversion. Functionally, catalyzes the oxidation of 5,10-methylenetetrahydrofolate to 5,10-methenyltetrahydrofolate and then the hydrolysis of 5,10-methenyltetrahydrofolate to 10-formyltetrahydrofolate. This chain is Bifunctional protein FolD, found in Lactobacillus helveticus (strain DPC 4571).